A 134-amino-acid chain; its full sequence is Profilin-3 (134 aa).

Cysteine 13 and cysteine 118 are oxidised to a cystine. An Involved in PIP2 interaction motif is present at residues 84-100 (AVIRGKKGSGGITIKKT). Threonine 114 bears the Phosphothreonine mark.

The protein belongs to the profilin family. Occurs in many kinds of cells as a complex with monomeric actin in a 1:1 ratio. Post-translationally, phosphorylated by MAP kinases.

The protein resides in the cytoplasm. It is found in the cytoskeleton. Binds to actin and affects the structure of the cytoskeleton. At high concentrations, profilin prevents the polymerization of actin, whereas it enhances it at low concentrations. The protein is Profilin-3 of Olea europaea (Common olive).